The following is a 315-amino-acid chain: Probable cell division protein WhiA (315 aa).

Positions 280–313 (SLKELGDLLDPPLSKSGVAYRMRKLEESVKEILQ) form a DNA-binding region, H-T-H motif.

The protein belongs to the WhiA family.

Involved in cell division and chromosome segregation. The polypeptide is Probable cell division protein WhiA (Syntrophomonas wolfei subsp. wolfei (strain DSM 2245B / Goettingen)).